A 227-amino-acid chain; its full sequence is Ribonuclease 3 (227 aa).

The RNase III domain maps to 6 to 128 (ASDYQQRIGY…VIAAIYLDAD (123 aa)). Residue E41 coordinates Mg(2+). The active site involves D45. D114 and E117 together coordinate Mg(2+). E117 is an active-site residue. The DRBM domain maps to 155-225 (DPKTRLQEWL…ASHAINQLDS (71 aa)). The segment covering 203-212 (GEGSSRRLAE) has biased composition (basic and acidic residues). The tract at residues 203–227 (GEGSSRRLAEQDAASHAINQLDSNK) is disordered.

This sequence belongs to the ribonuclease III family. As to quaternary structure, homodimer. It depends on Mg(2+) as a cofactor.

It is found in the cytoplasm. The enzyme catalyses Endonucleolytic cleavage to 5'-phosphomonoester.. Its function is as follows. Digests double-stranded RNA. Involved in the processing of primary rRNA transcript to yield the immediate precursors to the large and small rRNAs (23S and 16S). Processes some mRNAs, and tRNAs when they are encoded in the rRNA operon. Processes pre-crRNA and tracrRNA of type II CRISPR loci if present in the organism. In Xylella fastidiosa (strain M12), this protein is Ribonuclease 3.